A 711-amino-acid polypeptide reads, in one-letter code: Nucleolin (711 aa).

The segment at 1-304 (MVKLAKAGKN…KKQKVEGTEP (304 aa)) is disordered. N6-acetyllysine occurs at positions 9, 15, and 16. Positions 24-43 (VEEDSEDEEMSEDEEDDSSG) are enriched in acidic residues. 4 positions are modified to phosphoserine: Ser-28, Ser-34, Ser-41, and Ser-42. The span at 56–107 (AAATSAKKVVVSPTKKVAVATPAKKAAVTPGKKAAATPAKKTVTPAKAVATP) shows a compositional bias: low complexity. Repeat unit 1 spans residues 58-65 (ATSAKKVV). Positions 58–135 (ATSAKKVVVS…GAAIPAKGAK (78 aa)) are 8 X 8 AA tandem repeats of X-T-P-X-K-K-X-X. A Phosphoserine modification is found at Ser-67. A phosphothreonine mark is found at Thr-69, Thr-76, Thr-84, and Thr-92. 3 repeat units span residues 75-82 (ATPAKKAA), 83-90 (VTPGKKAA), and 91-98 (ATPAKKTV). Lys-96 is modified (N6-acetyllysine). At Thr-99 the chain carries Phosphothreonine. The 5; truncated repeat unit spans residues 99–104 (TPAKAV). Residue Lys-102 is modified to N6-acetyllysine. Residues 105–112 (ATPGKKGA) form repeat 6. At Thr-106 the chain carries Phosphothreonine. Lys-109 is subject to N6-acetyllysine. Thr-113 bears the Phosphothreonine mark. At Lys-116 the chain carries N6-acetyllysine. 2 consecutive repeat copies span residues 120-127 (ATPGKKGA) and 128-135 (AIPAKGAK). Phosphothreonine is present on Thr-121. Over residues 122-137 (PGKKGAAIPAKGAKNG) the composition is skewed to low complexity. Lys-124 is modified (N6-acetyllysine). Phosphoserine is present on residues Ser-145, Ser-153, Ser-184, and Ser-207. Composition is skewed to acidic residues over residues 145–171 (SDEEEEDDSEEDDEDDEDEDEDEDEIE) and 184–212 (SEDEDDEDDEDDEDEDDDDEEDDSEEEAM). Position 215 is a phosphothreonine (Thr-215). Over residues 235–273 (EDEDEEEDDEDEDDDDDEDDEDEDDDDEDEEEEEEEEEP) the composition is skewed to acidic residues. The segment covering 274–301 (VKEAPGKRKKEMAKQKAAPEAKKQKVEG) has biased composition (basic and acidic residues). A Glycyl lysine isopeptide (Lys-Gly) (interchain with G-Cter in SUMO1); alternate cross-link involves residue Lys-298. Lys-298 is covalently cross-linked (Glycyl lysine isopeptide (Lys-Gly) (interchain with G-Cter in SUMO2); alternate). Thr-302 bears the Phosphothreonine mark. RRM domains follow at residues 308-384 (FNLF…KPKG) and 394-467 (RTLL…YTGE). Lys-319 carries the N6-acetyllysine modification. Lys-325 is covalently cross-linked (Glycyl lysine isopeptide (Lys-Gly) (interchain with G-Cter in SUMO1); alternate). Residue Lys-325 forms a Glycyl lysine isopeptide (Lys-Gly) (interchain with G-Cter in SUMO2); alternate linkage. At Lys-349 the chain carries N6-acetyllysine. A Phosphoserine modification is found at Ser-357. Phosphothreonine is present on Thr-368. Residue Lys-371 forms a Glycyl lysine isopeptide (Lys-Gly) (interchain with G-Cter in SUMO2) linkage. Residue Lys-378 forms a Glycyl lysine isopeptide (Lys-Gly) (interchain with G-Cter in SUMO2); alternate linkage. At Lys-378 the chain carries N6-acetyllysine; alternate. 2 positions are modified to N6-acetyllysine: Lys-399 and Lys-404. Thr-406 is modified (phosphothreonine). 2 positions are modified to N6-acetyllysine: Lys-428 and Lys-445. A phosphoserine mark is found at Ser-459 and Ser-461. N6-acetyllysine is present on residues Lys-468 and Lys-478. Residues 487 to 561 (KTLVLSNLSY…RAIRLELQGP (75 aa)) form the RRM 3 domain. Lys-514 is covalently cross-linked (Glycyl lysine isopeptide (Lys-Gly) (interchain with G-Cter in SUMO2); alternate). Lys-514 carries the post-translational modification N6-acetyllysine; alternate. Lys-522 bears the N6-acetyllysine mark. At Ser-564 the chain carries Phosphoserine. Lys-573 is subject to N6-acetyllysine. In terms of domain architecture, RRM 4 spans 573 to 648 (KTLFVKGLSE…NKVTLDWAKP (76 aa)). Residue Lys-578 forms a Glycyl lysine isopeptide (Lys-Gly) (interchain with G-Cter in SUMO2); alternate linkage. Residue Lys-578 is modified to N6-acetyllysine; alternate. Ser-581 bears the Phosphoserine mark. Lys-590 is covalently cross-linked (Glycyl lysine isopeptide (Lys-Gly) (interchain with G-Cter in SUMO1); alternate). Lys-590 participates in a covalent cross-link: Glycyl lysine isopeptide (Lys-Gly) (interchain with G-Cter in SUMO2); alternate. Ser-592 and Ser-620 each carry phosphoserine. Lys-625 is covalently cross-linked (Glycyl lysine isopeptide (Lys-Gly) (interchain with G-Cter in SUMO2)). The segment at 641–711 (VTLDWAKPKG…KPQGKKTKFE (71 aa)) is disordered. At Lys-647 the chain carries N6-acetyllysine. Residues 651-697 (EGGFGGRGGGRGGFGGRGGGRGGRGGFGGRGRGGFGGRGGFRGGRGG) are compositionally biased toward gly residues. Asymmetric dimethylarginine occurs at positions 657, 661, 667, 671, 674, 680, 682, 688, and 692. Arg-695 carries the post-translational modification Asymmetric dimethylarginine; alternate. Arg-695 is subject to Omega-N-methylarginine; alternate. The segment covering 698–711 (GGDHKPQGKKTKFE) has biased composition (basic and acidic residues).

As to quaternary structure, identified in a IGF2BP1-dependent mRNP granule complex containing untranslated mRNAs. Component of the SWAP complex that consists of NPM1, NCL/nucleolin, PARP1 and SWAP70. Component of a complex which is at least composed of HTATSF1/Tat-SF1, the P-TEFb complex components CDK9 and CCNT1, RNA polymerase II, SUPT5H, and NCL/nucleolin. Interacts with AICDA. Interacts with APTX. Interacts with C1QBP. Interacts with ERBB4. Interacts (via C-terminus) with FMR1 isoform 6 (via N-terminus). Interacts with GZF1; this interaction is important for nucleolar localization of GZF1. Interacts with NSUN2. Interacts with NVL. Interacts (via N-terminus domain) with SETX. Interacts (via RRM1 and C-terminal RRM4/Arg/Gly-rich domains) with TERT; the interaction is important for nucleolar localization of TERT. Interacts with WDR46. Interacts with ZFP36. Interacts with LRRC34. Interacts with RRP1B. Interacts with HNRNPU; this interaction occurs during mitosis. Interacts with RIOK1; RIOK1 recruits NCL to PRMT5 for symmetrically methylation. Interacts with ZBTB7B. Interacts with MDK; this interaction promotes NCL clustering and lateral movements of this complex into lipid rafts leading to MDK internalization. Interacts with HDGF. Interacts with ALKBH2. Interacts with IGFBP5; this interaction is necessary for IGFBP5 localization to the nucleus. Some glutamate residues are glycylated by TTLL8. This modification occurs exclusively on glutamate residues and results in a glycine chain on the gamma-carboxyl group. Post-translationally, symmetrically methylated by PRMT5.

It is found in the nucleus. The protein resides in the nucleolus. It localises to the cytoplasm. Functionally, nucleolin is the major nucleolar protein of growing eukaryotic cells. It is found associated with intranucleolar chromatin and pre-ribosomal particles. It induces chromatin decondensation by binding to histone H1. It is thought to play a role in pre-rRNA transcription and ribosome assembly. May play a role in the process of transcriptional elongation. Binds RNA oligonucleotides with 5'-UUAGGG-3' repeats more tightly than the telomeric single-stranded DNA 5'-TTAGGG-3' repeats. The chain is Nucleolin (NCL) from Macaca fascicularis (Crab-eating macaque).